A 1696-amino-acid polypeptide reads, in one-letter code: PH domain leucine-rich repeat protein phosphatase 1 (1696 aa).

The residue at position 1 (M1) is an N-acetylmethionine. Disordered stretches follow at residues 1–97 (MEPA…GGGA) and 222–398 (LGHG…VVGE). Over residues 79 to 92 (VPQPAAGGAAPVTA) the composition is skewed to low complexity. Over residues 313–325 (DTESFSLSPSAES) the composition is skewed to polar residues. A Phosphoserine modification is found at S378. The region spanning 499–599 (RIQLSGMYNV…WLRQVSKVAS (101 aa)) is the PH domain. LRR repeat units follow at residues 601 to 622 (RISS…LFYS), 624 to 645 (DLTH…PAAR), 655 to 676 (KLKS…VCSI), 678 to 699 (TLAE…VGAM), 701 to 722 (NLQT…LENM), 724 to 746 (QLSY…EKLT), 836 to 857 (FLKA…PVPN), 858 to 879 (YLSY…VCES), 881 to 902 (KLEV…LFCN), 904 to 925 (SLRK…LERT), 926 to 947 (SVEV…LLMK), 950 to 971 (SLRF…TLSE), 976 to 996 (ILQE…PLLT), 1000 to 1021 (RLKI…KMAK), 1024 to 1045 (ELEE…IMNC), 1047 to 1068 (RMHT…MQLP), 1069 to 1090 (EVKC…ENLP), and 1092 to 1113 (KLQE…SLEL). The region spanning 1138–1385 (SHGYTEASGV…DSISAVVVQL (248 aa)) is the PPM-type phosphatase domain. D1173, G1174, K1337, and D1376 together coordinate Mn(2+). 2 disordered regions span residues 1422–1473 (RPSD…SPAY) and 1610–1696 (KPGG…DTPL). Low complexity-rich tracts occupy residues 1431 to 1452 (SSSS…MSSE), 1647 to 1660 (QQQQ…QQQQ), and 1670 to 1680 (QAQAQAQAQAQ). Residues 1694 to 1696 (TPL) carry the PDZ-binding motif.

Interacts with the nucleotide free form of K-Ras (KRAS) via its LRR repeats. Interacts with AKT2, AKT3 and PRKCB isoform beta-II. Interacts with WDR48 and USP12. It depends on Mn(2+) as a cofactor. As to expression, mainly present in brain (at protein level). Isoform 2 is more abundant in adult brain neurons than isoform 1 in. Isoforms 1 and 2 are expressed in the retina but not found in rod outer segments.

The protein resides in the cytoplasm. It localises to the membrane. Its subcellular location is the cell membrane. It is found in the nucleus. The protein localises to the nucleoplasm. The protein resides in the nucleus membrane. The catalysed reaction is O-phospho-L-seryl-[protein] + H2O = L-seryl-[protein] + phosphate. It carries out the reaction O-phospho-L-threonyl-[protein] + H2O = L-threonyl-[protein] + phosphate. With respect to regulation, insensitive to okadaic acid. Deubiquitination by WDR48-USP12 complex positively regulates PHLPP1 stability. Protein phosphatase involved in regulation of Akt and PKC signaling. Mediates dephosphorylation in the C-terminal domain hydrophobic motif of members of the AGC Ser/Thr protein kinase family; specifically acts on 'Ser-473' of AKT2 and AKT3, 'Ser-660' of PRKCB and 'Ser-657' of PRKCA. Isoform 2 seems to have a major role in regulating Akt signaling in hippocampal neurons while isoform 1 may promote Akt and PKC activation and inhibit ERK signaling. Akt regulates the balance between cell survival and apoptosis through a cascade that primarily alters the function of transcription factors that regulate pro- and antiapoptotic genes. Dephosphorylation of 'Ser-473' of Akt triggers apoptosis and suppression of tumor growth. Dephosphorylation of PRKCA and PRKCB leads to their destabilization and degradation. Dephosphorylates STK4 on 'Thr-387' leading to STK4 activation and apoptosis. Dephosphorylates RPS6KB1 and is involved in regulation of cap-dependent translation. Inhibits cancer cell proliferation and may act as a tumor suppressor. Dephosphorylates RAF1 inhibiting its kinase activity. May act as a negative regulator of K-Ras signaling in membrane rafts. Involved in the hippocampus-dependent long-term memory formation. Involved in circadian control by regulating the consolidation of circadian periodicity after resetting. Involved in development and function of regulatory T-cells. The sequence is that of PH domain leucine-rich repeat protein phosphatase 1 (Phlpp1) from Rattus norvegicus (Rat).